A 430-amino-acid chain; its full sequence is Adenylosuccinate synthetase (430 aa).

GTP is bound by residues Gly-12–Lys-18 and Gly-40–Thr-42. Asp-13 (proton acceptor) is an active-site residue. Mg(2+)-binding residues include Asp-13 and Gly-40. Residues Asp-13–Lys-16, Asn-38–His-41, Thr-128, Arg-142, Gln-223, Thr-238, and Arg-302 each bind IMP. Residue His-41 is the Proton donor of the active site. Residue Thr-298–Arg-304 participates in substrate binding. GTP is bound by residues Arg-304, Ser-330 to Asp-332, and Ser-412 to Gly-414.

Belongs to the adenylosuccinate synthetase family. As to quaternary structure, homodimer. Mg(2+) is required as a cofactor.

It localises to the cytoplasm. The enzyme catalyses IMP + L-aspartate + GTP = N(6)-(1,2-dicarboxyethyl)-AMP + GDP + phosphate + 2 H(+). Its pathway is purine metabolism; AMP biosynthesis via de novo pathway; AMP from IMP: step 1/2. Its function is as follows. Plays an important role in the de novo pathway of purine nucleotide biosynthesis. Catalyzes the first committed step in the biosynthesis of AMP from IMP. The sequence is that of Adenylosuccinate synthetase from Enterococcus faecalis (strain ATCC 700802 / V583).